Consider the following 380-residue polypeptide: Probable protein phosphatase 2C 2 (380 aa).

Positions 69 to 339 (RSGSFADIGP…DNLTVIVICF (271 aa)) constitute a PPM-type phosphatase domain. Mn(2+) contacts are provided by D113, G114, D287, and D330.

The protein belongs to the PP2C family. It depends on Mg(2+) as a cofactor. Mn(2+) is required as a cofactor.

The enzyme catalyses O-phospho-L-seryl-[protein] + H2O = L-seryl-[protein] + phosphate. It carries out the reaction O-phospho-L-threonyl-[protein] + H2O = L-threonyl-[protein] + phosphate. The sequence is that of Probable protein phosphatase 2C 2 from Oryza sativa subsp. japonica (Rice).